The following is a 306-amino-acid chain: Dirigent protein 24 (306 aa).

The signal sequence occupies residues 1–21 (MAKALSLTIFLFLLIASNVQS). A disordered region spans residues 36–61 (PQVPEEEDDSPQAVTTTPTPIPLPGP).

It belongs to the plant dirigent protein family. Homodimer.

Its subcellular location is the secreted. It is found in the extracellular space. The protein resides in the apoplast. In terms of biological role, dirigent proteins impart stereoselectivity on the phenoxy radical-coupling reaction, yielding optically active lignans from two molecules of coniferyl alcohol in the biosynthesis of lignans, flavonolignans, and alkaloids and thus plays a central role in plant secondary metabolism. The sequence is that of Dirigent protein 24 (DIR24) from Arabidopsis thaliana (Mouse-ear cress).